We begin with the raw amino-acid sequence, 900 residues long: Probable beta-mannosidase (900 aa).

The first 21 residues, 1–21 (MRTSLVVCLFWLLFQLHTTHG), serve as a signal peptide directing secretion. N-linked (GlcNAc...) asparagine glycans are attached at residues N38, N42, and N131. E463 serves as the catalytic Proton donor. N-linked (GlcNAc...) asparagine glycans are attached at residues N477, N576, N661, and N738.

The protein belongs to the glycosyl hydrolase 2 family.

It localises to the lysosome. The enzyme catalyses Hydrolysis of terminal, non-reducing beta-D-mannose residues in beta-D-mannosides.. This is Probable beta-mannosidase from Caenorhabditis elegans.